The chain runs to 135 residues: Transcription antitermination protein NusB (135 aa).

Belongs to the NusB family.

In terms of biological role, involved in transcription antitermination. Required for transcription of ribosomal RNA (rRNA) genes. Binds specifically to the boxA antiterminator sequence of the ribosomal RNA (rrn) operons. The chain is Transcription antitermination protein NusB from Shewanella halifaxensis (strain HAW-EB4).